A 184-amino-acid polypeptide reads, in one-letter code: Photosystem I assembly protein Ycf4 (184 aa).

2 helical membrane passes run 22-42 (FCWA…GISS) and 57-77 (IVFF…LFIS).

Belongs to the Ycf4 family.

It is found in the plastid. The protein resides in the chloroplast thylakoid membrane. Its function is as follows. Seems to be required for the assembly of the photosystem I complex. In Coffea arabica (Arabian coffee), this protein is Photosystem I assembly protein Ycf4.